The primary structure comprises 395 residues: Synaptotagmin-8 (395 aa).

Residues 1-44 are Extracellular-facing; that stretch reads MQADRSMKMGHALNPFSTSAPLDATAGPSLIPDLITRIPWPRWT. A helical; Signal-anchor for type III membrane protein transmembrane segment spans residues 45–65; sequence LFIAILAAGVLLVSCLLCVIC. The Cytoplasmic segment spans residues 66 to 395; that stretch reads CYCHRHRHRK…PRLPLLRPRS (330 aa). C2 domains are found at residues 113–229 and 241–370; these read QWGR…ESWY and QMGE…AQWH.

The protein belongs to the synaptotagmin family. Homodimer or homooligomer. Homodimerization and homooligomerization do not depend on Ca(2+). Interacts with SYNCRIP isoform 2 C-terminus. Binds inositol 1,3,4,5-tetrakisphosphate (IP4). Binds to AP2 in a Ca(2+)-independent manner. Interacts with STX1A, STX1B and STX2; the interaction is Ca(2+)-dependent. In terms of tissue distribution, ubiquitous. Detected in testis and brain. Expressed in primary neurons, neuroendocrine and endocrine cells.

The protein localises to the cytoplasm. It localises to the cell membrane. The protein resides in the cytoplasmic vesicle. It is found in the secretory vesicle. Its subcellular location is the acrosome. Functionally, involved in the trafficking and exocytosis of secretory vesicles in non-neuronal tissues. Mediates Ca(2+)-regulation of exocytosis acrosomal reaction in sperm. May mediate Ca(2+)-regulation of exocytosis in insulin secreted cells. The chain is Synaptotagmin-8 (Syt8) from Mus musculus (Mouse).